The chain runs to 683 residues: Sorting nexin MVP1 (683 aa).

2 disordered regions span residues 1–25 (MSRH…PTSP) and 246–276 (LLAH…TRQE). The span at 248 to 257 (AHNQGSSTDT) shows a compositional bias: polar residues. Residues 302 to 418 (PEDQVTVRLR…EVFFTEPRPI (117 aa)) form the PX domain. A 1,2-diacyl-sn-glycero-3-phospho-(1D-myo-inositol-3-phosphate)-binding residues include R338, S340, K364, and R385.

It belongs to the sorting nexin family.

Its subcellular location is the cytoplasm. The protein resides in the membrane. Required for vacuolar protein sorting. In Mycosarcoma maydis (Corn smut fungus), this protein is Sorting nexin MVP1 (MVP1).